Here is a 333-residue protein sequence, read N- to C-terminus: Glycerol-3-phosphate dehydrogenase [NAD(P)+] (333 aa).

4 residues coordinate NADPH: F19, R40, R41, and K113. Sn-glycerol 3-phosphate contacts are provided by K113 and G141. A145 is a binding site for NADPH. Sn-glycerol 3-phosphate is bound by residues K196, D249, S259, R260, and N261. Catalysis depends on K196, which acts as the Proton acceptor. R260 is an NADPH binding site. V282 and E283 together coordinate NADPH.

This sequence belongs to the NAD-dependent glycerol-3-phosphate dehydrogenase family.

The protein localises to the cytoplasm. The enzyme catalyses sn-glycerol 3-phosphate + NAD(+) = dihydroxyacetone phosphate + NADH + H(+). It carries out the reaction sn-glycerol 3-phosphate + NADP(+) = dihydroxyacetone phosphate + NADPH + H(+). Its pathway is membrane lipid metabolism; glycerophospholipid metabolism. In terms of biological role, catalyzes the reduction of the glycolytic intermediate dihydroxyacetone phosphate (DHAP) to sn-glycerol 3-phosphate (G3P), the key precursor for phospholipid synthesis. The chain is Glycerol-3-phosphate dehydrogenase [NAD(P)+] from Sinorhizobium fredii (strain NBRC 101917 / NGR234).